Consider the following 633-residue polypeptide: Chaperone protein DnaK (633 aa).

T198 carries the phosphothreonine; by autocatalysis modification.

Belongs to the heat shock protein 70 family.

Its function is as follows. Acts as a chaperone. The polypeptide is Chaperone protein DnaK (Rhodopseudomonas palustris (strain HaA2)).